We begin with the raw amino-acid sequence, 501 residues long: Ribose import ATP-binding protein RbsA (501 aa).

2 ABC transporter domains span residues Leu5–Lys241 and Ala252–Leu495. Gly37–Ser44 lines the ATP pocket.

This sequence belongs to the ABC transporter superfamily. Ribose importer (TC 3.A.1.2.1) family. As to quaternary structure, the complex is composed of an ATP-binding protein (RbsA), two transmembrane proteins (RbsC) and a solute-binding protein (RbsB).

It localises to the cell inner membrane. The enzyme catalyses D-ribose(out) + ATP + H2O = D-ribose(in) + ADP + phosphate + H(+). Part of the ABC transporter complex RbsABC involved in ribose import. Responsible for energy coupling to the transport system. This is Ribose import ATP-binding protein RbsA from Escherichia coli O6:H1 (strain CFT073 / ATCC 700928 / UPEC).